Consider the following 456-residue polypeptide: Probable transcription factor At3g04930 (456 aa).

A disordered region spans residues 1–71 (MTSDHRDALF…LNSPSTSSLP (71 aa)). Composition is skewed to acidic residues over residues 15-38 (ESPDPDEGGVADGGESDTDEDLRD) and 50-62 (AEAEDDDPEEEDL). The residue at position 16 (serine 16) is a Phosphoserine.

The protein belongs to the GeBP family.

The sequence is that of Probable transcription factor At3g04930 from Arabidopsis thaliana (Mouse-ear cress).